The sequence spans 146 residues: Cytochrome c oxidase subunit 5A, mitochondrial (146 aa).

Residues 1–37 (MLAAALRRCTAAAAARGLLHPASAPSPAAAVCSIRCY) constitute a mitochondrion transit peptide. Positions 2–16 (LAAALRRCTAAAAAR) match the SIFI-degron motif. An N6-acetyllysine mark is found at K83 and K109. T137 carries the phosphothreonine modification.

Belongs to the cytochrome c oxidase subunit 5A family. In terms of assembly, component of the cytochrome c oxidase (complex IV, CIV), a multisubunit enzyme composed of 14 subunits. The complex is composed of a catalytic core of 3 subunits MT-CO1, MT-CO2 and MT-CO3, encoded in the mitochondrial DNA, and 11 supernumerary subunits COX4I, COX5A, COX5B, COX6A, COX6B, COX6C, COX7A, COX7B, COX7C, COX8 and NDUFA4, which are encoded in the nuclear genome. The complex exists as a monomer or a dimer and forms supercomplexes (SCs) in the inner mitochondrial membrane with NADH-ubiquinone oxidoreductase (complex I, CI) and ubiquinol-cytochrome c oxidoreductase (cytochrome b-c1 complex, complex III, CIII), resulting in different assemblies (supercomplex SCI(1)III(2)IV(1) and megacomplex MCI(2)III(2)IV(2)). Interacts with AFG1L. Interacts with RAB5IF. In terms of processing, in response to mitochondrial stress, the precursor protein is ubiquitinated by the SIFI complex in the cytoplasm before mitochondrial import, leading to its degradation. Within the SIFI complex, UBR4 initiates ubiquitin chain that are further elongated or branched by KCMF1.

The protein localises to the mitochondrion inner membrane. It participates in energy metabolism; oxidative phosphorylation. Functionally, component of the cytochrome c oxidase, the last enzyme in the mitochondrial electron transport chain which drives oxidative phosphorylation. The respiratory chain contains 3 multisubunit complexes succinate dehydrogenase (complex II, CII), ubiquinol-cytochrome c oxidoreductase (cytochrome b-c1 complex, complex III, CIII) and cytochrome c oxidase (complex IV, CIV), that cooperate to transfer electrons derived from NADH and succinate to molecular oxygen, creating an electrochemical gradient over the inner membrane that drives transmembrane transport and the ATP synthase. Cytochrome c oxidase is the component of the respiratory chain that catalyzes the reduction of oxygen to water. Electrons originating from reduced cytochrome c in the intermembrane space (IMS) are transferred via the dinuclear copper A center (CU(A)) of subunit 2 and heme A of subunit 1 to the active site in subunit 1, a binuclear center (BNC) formed by heme A3 and copper B (CU(B)). The BNC reduces molecular oxygen to 2 water molecules using 4 electrons from cytochrome c in the IMS and 4 protons from the mitochondrial matrix. This Mus musculus (Mouse) protein is Cytochrome c oxidase subunit 5A, mitochondrial (Cox5a).